Consider the following 432-residue polypeptide: Adenylosuccinate synthetase (432 aa).

GTP-binding positions include 12–18 (GDEGKGK) and 40–42 (GHT). Aspartate 13 functions as the Proton acceptor in the catalytic mechanism. Mg(2+)-binding residues include aspartate 13 and glycine 40. Residues 13 to 16 (DEGK), 38 to 41 (NAGH), threonine 130, arginine 144, glutamine 225, threonine 240, and arginine 304 each bind IMP. Catalysis depends on histidine 41, which acts as the Proton donor. Residue 300-306 (ATTGRPR) coordinates substrate. GTP-binding positions include arginine 306, 332–334 (KLD), and 414–416 (SVG).

This sequence belongs to the adenylosuccinate synthetase family. Homodimer. It depends on Mg(2+) as a cofactor.

The protein resides in the cytoplasm. The enzyme catalyses IMP + L-aspartate + GTP = N(6)-(1,2-dicarboxyethyl)-AMP + GDP + phosphate + 2 H(+). Its pathway is purine metabolism; AMP biosynthesis via de novo pathway; AMP from IMP: step 1/2. Plays an important role in the de novo pathway of purine nucleotide biosynthesis. Catalyzes the first committed step in the biosynthesis of AMP from IMP. This is Adenylosuccinate synthetase from Anaeromyxobacter dehalogenans (strain 2CP-C).